The primary structure comprises 206 residues: Small ribosomal subunit protein uS4 (206 aa).

In terms of domain architecture, S4 RNA-binding spans 98–158 (RRLDNVVFRL…EKSRSMELIK (61 aa)).

This sequence belongs to the universal ribosomal protein uS4 family. Part of the 30S ribosomal subunit. Contacts protein S5. The interaction surface between S4 and S5 is involved in control of translational fidelity.

Its function is as follows. One of the primary rRNA binding proteins, it binds directly to 16S rRNA where it nucleates assembly of the body of the 30S subunit. With S5 and S12 plays an important role in translational accuracy. This Thermoanaerobacter pseudethanolicus (strain ATCC 33223 / 39E) (Clostridium thermohydrosulfuricum) protein is Small ribosomal subunit protein uS4.